The primary structure comprises 113 residues: U11-theraphotoxin-Hhn1a (113 aa).

An N-terminal signal peptide occupies residues 1–21 (MNTVRVTFLLVFVLAVSLGQA). Residues 22–74 (DKDENRMEMQEKTEQGNSYLDFAENLLLQKLEELEAKLLEEDSEESRNSRQKR) constitute a propeptide that is removed on maturation. Residues 60-69 (LEEDSEESRN) are compositionally biased toward basic and acidic residues. The interval 60-83 (LEEDSEESRNSRQKRCIGEGVPCD) is disordered. Disulfide bonds link cysteine 75/cysteine 90, cysteine 82/cysteine 95, and cysteine 89/cysteine 110.

It belongs to the neurotoxin 14 (magi-1) family. 01 (HNTX-16) subfamily. In terms of tissue distribution, expressed by the venom gland.

The protein localises to the secreted. Probable ion channel inhibitor. In Cyriopagopus hainanus (Chinese bird spider), this protein is U11-theraphotoxin-Hhn1a.